Reading from the N-terminus, the 66-residue chain is Phylloseptin-S3 (66 aa).

The first 22 residues, 1-22 (MAFLKKSLFLVLFLGLVSLSIC), serve as a signal peptide directing secretion. Residues 23–46 (EEEKRETEEEEHDQEEDDKSEEKR) constitute a propeptide that is removed on maturation. The interval 25–44 (EKRETEEEEHDQEEDDKSEE) is disordered. Residues 30–41 (EEEEHDQEEDDK) show a composition bias toward acidic residues. Phe-65 carries the phenylalanine amide modification.

It belongs to the frog skin active peptide (FSAP) family. Phylloseptin subfamily. As to expression, expressed by the skin glands.

The protein localises to the secreted. The protein resides in the target cell membrane. In terms of biological role, antimicrobial peptide with activity against the Gram-positive S.pyogenes (MIC=12.5 uM), but not against all other bacteria tested (both Gram-positive and Gram-negative). Does not show activity against fungi, and against Leishmania species. This chain is Phylloseptin-S3, found in Phyllomedusa sauvagei (Sauvage's leaf frog).